The following is a 565-amino-acid chain: NAD-dependent malic enzyme (565 aa).

Residue Tyr104 is the Proton donor of the active site. Residue Arg157 participates in NAD(+) binding. Lys175 (proton acceptor) is an active-site residue. Positions 246, 247, and 270 each coordinate a divalent metal cation. 2 residues coordinate NAD(+): Asp270 and Asn418.

The protein belongs to the malic enzymes family. In terms of assembly, homotetramer. Mg(2+) is required as a cofactor. Mn(2+) serves as cofactor.

It catalyses the reaction (S)-malate + NAD(+) = pyruvate + CO2 + NADH. It carries out the reaction oxaloacetate + H(+) = pyruvate + CO2. The sequence is that of NAD-dependent malic enzyme from Shigella sonnei (strain Ss046).